A 408-amino-acid chain; its full sequence is Phosphatidylinositol transfer protein CSR1 (408 aa).

The residue at position 2 (serine 2) is an N-acetylserine. Serine 2 is subject to Phosphoserine. Residues 157–317 (ETGVIKNLEL…YLGGENDNDL (161 aa)) form the CRAL-TRIO domain.

This sequence belongs to the PITP family. Forms a complex with 2 TSA2 subunits. Binds phosphatidylinositol (PtdIns).

Its subcellular location is the cytoplasm. It localises to the microsome. The protein resides in the endosome. It carries out the reaction a 1,2-diacyl-sn-glycero-3-phospho-(1D-myo-inositol)(in) = a 1,2-diacyl-sn-glycero-3-phospho-(1D-myo-inositol)(out). Its function is as follows. Non-classical phosphatidylinositol (PtdIns) transfer protein (PITP), which exhibits PtdIns-binding/transfer activity in the absence of detectable PtdCho-binding/transfer activity. Activates SPO14/PLD1 (phospholipase D1) by stimulating phosphoinositide synthesis via the STT4 PtdIns 4-kinase. Modulates ArfGAP function through effects on SPO14 activity. Inhibits phosphatidylcholine degradation by PLB1 (phospholipase B1). May also regulate post-Golgi membrane-trafficking events and have a role resistance to oxidative stress. Inhibits fatty acid synthase activity in response to heme depletion and oleic acid starvation, preventing saturated fatty acid (SFA) accumulation. The polypeptide is Phosphatidylinositol transfer protein CSR1 (CSR1) (Saccharomyces cerevisiae (strain ATCC 204508 / S288c) (Baker's yeast)).